The primary structure comprises 144 residues: Eukaryotic translation initiation factor 1A, X-chromosomal (144 aa).

The segment covering 1-15 has biased composition (basic residues); that stretch reads MPKNKGKGGKNRRRG. Disordered regions lie at residues 1–26 and 114–144; these read MPKN…KREL and KINE…IDDI. Residues 16–26 show a composition bias toward basic and acidic residues; sequence KNENESEKREL. The S1-like domain maps to 22–96; it reads EKRELVFKED…NKADVILKYN (75 aa). Residues 124 to 144 are compositionally biased toward acidic residues; the sequence is GDDDEIQFDDIGDDDEDIDDI.

It belongs to the eIF-1A family. Component of the 43S pre-initiation complex (43S PIC), which is composed of the 40S ribosomal subunit, EIF1, eIF1A (EIF1AX), eIF3 complex, EIF5 and eIF2-GTP-initiator tRNA complex (eIF2 ternary complex). Interacts with EIF5; this interaction contributes to the maintenance of EIF1 within the open 43S PIC. Interacts through its C-terminal domain (CTD) with the CTD of EIF5B; from the location of the start codon by the 43S complex until the formation of the 80S complex. In terms of assembly, (Microbial infection) Interacts with human respiratory syncytial virus (HRSV) nucleoprotein; this interaction recruits EIF1AX to the viral replication complex to facilitate viral genomic RNA synthesis and virus production.

It is found in the cytoplasm. Component of the 43S pre-initiation complex (43S PIC), which binds to the mRNA cap-proximal region, scans mRNA 5'-untranslated region, and locates the initiation codon. This protein enhances formation of the cap-proximal complex. Together with EIF1, facilitates scanning, start codon recognition, promotion of the assembly of 48S complex at the initiation codon (43S PIC becomes 48S PIC after the start codon is reached), and dissociation of aberrant complexes. After start codon location, together with EIF5B orients the initiator methionine-tRNA in a conformation that allows 60S ribosomal subunit joining to form the 80S initiation complex. Is released after 80S initiation complex formation, just after GTP hydrolysis by EIF5B, and before release of EIF5B. Its globular part is located in the A site of the 40S ribosomal subunit. Its interaction with EIF5 during scanning contribute to the maintenance of EIF1 within the open 43S PIC. In contrast to yeast orthologs, does not bind EIF1. This Homo sapiens (Human) protein is Eukaryotic translation initiation factor 1A, X-chromosomal (EIF1AX).